The sequence spans 117 residues: Large ribosomal subunit protein bL19 (117 aa).

The protein belongs to the bacterial ribosomal protein bL19 family.

This protein is located at the 30S-50S ribosomal subunit interface and may play a role in the structure and function of the aminoacyl-tRNA binding site. This chain is Large ribosomal subunit protein bL19, found in Shewanella sediminis (strain HAW-EB3).